The sequence spans 189 residues: Elongation factor P (189 aa).

Belongs to the elongation factor P family.

The protein resides in the cytoplasm. The protein operates within protein biosynthesis; polypeptide chain elongation. Its function is as follows. Involved in peptide bond synthesis. Stimulates efficient translation and peptide-bond synthesis on native or reconstituted 70S ribosomes in vitro. Probably functions indirectly by altering the affinity of the ribosome for aminoacyl-tRNA, thus increasing their reactivity as acceptors for peptidyl transferase. The sequence is that of Elongation factor P from Sinorhizobium medicae (strain WSM419) (Ensifer medicae).